The primary structure comprises 159 residues: Large ribosomal subunit protein bL17 (159 aa).

Low complexity predominate over residues 124 to 135; that stretch reads EANRATRAAASK. The disordered stretch occupies residues 124 to 159; sequence EANRATRAAASKQAEEAKAEEAEATEAEAEETTEEK. Positions 145–159 are enriched in acidic residues; that stretch reads AEATEAEAEETTEEK.

This sequence belongs to the bacterial ribosomal protein bL17 family. In terms of assembly, part of the 50S ribosomal subunit. Contacts protein L32.

In Corynebacterium aurimucosum (strain ATCC 700975 / DSM 44827 / CIP 107346 / CN-1) (Corynebacterium nigricans), this protein is Large ribosomal subunit protein bL17.